The sequence spans 422 residues: Elongation factor 1-gamma (422 aa).

One can recognise a GST N-terminal domain in the interval 1 to 82; sequence MALVLHAGKT…YVARLKADNP (82 aa). Positions 87–215 constitute a GST C-terminal domain; it reads SLIDYAHIEQ…VKQTESVPPV (129 aa). Positions 210-269 are disordered; sequence ESVPPVPSAKKPSQPKETKSKAKEEPKKEAKKEPAKPKAEAAEEVEEAPKPKPKNPLDLL. The span at 223–250 shows a compositional bias: basic and acidic residues; it reads QPKETKSKAKEEPKKEAKKEPAKPKAEA. The EF-1-gamma C-terminal domain occupies 262–422; sequence PKNPLDLLPP…EALLDAKCFK (161 aa).

EF-1 is composed of four subunits: alpha, beta, delta, and gamma.

Functionally, probably plays a role in anchoring the complex to other cellular components. The sequence is that of Elongation factor 1-gamma from Prunus avium (Cherry).